Consider the following 607-residue polypeptide: ATP-dependent rRNA helicase SPB4 (607 aa).

The Q motif motif lies at 7-35 (WDDLEYPIQPWIRSAVDVMGFENMTPVQA). Residues 38-224 (IPLFARNKDV…KTGLRNPVKV (187 aa)) enclose the Helicase ATP-binding domain. Position 51 to 58 (51 to 58 (SVTGSGKT)) interacts with ATP. Positions 172–175 (DEAD) match the DEAD box motif. One can recognise a Helicase C-terminal domain in the interval 248–404 (KLEQVISIIN…EISLDIVNLP (157 aa)). Residues 527–607 (KSELKKKNMS…NGMQGSFDDL (81 aa)) are disordered. Residues 529–565 (ELKKKNMSWSNNTQSKEEKVERRTKMALKRKRIEEEL) adopt a coiled-coil conformation. 2 stretches are compositionally biased toward basic and acidic residues: residues 543 to 552 (SKEEKVERRT) and 560 to 570 (RIEEELSKEAD). Over residues 587 to 601 (ILQNKKSKNSNNGMQ) the composition is skewed to polar residues.

Belongs to the DEAD box helicase family. DDX55/SPB4 subfamily. In terms of assembly, component of pre-60S ribosomal complexes.

The protein localises to the nucleus. The protein resides in the nucleolus. The catalysed reaction is ATP + H2O = ADP + phosphate + H(+). In terms of biological role, ATP-binding RNA helicase involved in the biogenesis of 60S ribosomal subunits. Binds 90S pre-ribosomal particles and dissociates from pre-60S ribosomal particles after processing of 27SB pre-rRNA. Required for the normal formation of 18S rRNA through the processing of pre-rRNAs at sites A0, A1 and A2, and the normal formation of 25S and 5.8S rRNAs through the processing of pre-rRNAs at sites C1 and C2. In Vanderwaltozyma polyspora (strain ATCC 22028 / DSM 70294 / BCRC 21397 / CBS 2163 / NBRC 10782 / NRRL Y-8283 / UCD 57-17) (Kluyveromyces polysporus), this protein is ATP-dependent rRNA helicase SPB4.